The chain runs to 332 residues: tRNA-dihydrouridine(20/20a) synthase (332 aa).

FMN is bound by residues 22-24 and glutamine 75; that span reads PMM. The active-site Proton donor is cysteine 105. FMN is bound by residues lysine 144, histidine 177, 217 to 219, and 239 to 240; these read NGG and GR.

This sequence belongs to the Dus family. DusA subfamily. Requires FMN as cofactor.

The catalysed reaction is 5,6-dihydrouridine(20) in tRNA + NADP(+) = uridine(20) in tRNA + NADPH + H(+). It carries out the reaction 5,6-dihydrouridine(20) in tRNA + NAD(+) = uridine(20) in tRNA + NADH + H(+). The enzyme catalyses 5,6-dihydrouridine(20a) in tRNA + NADP(+) = uridine(20a) in tRNA + NADPH + H(+). It catalyses the reaction 5,6-dihydrouridine(20a) in tRNA + NAD(+) = uridine(20a) in tRNA + NADH + H(+). Functionally, catalyzes the synthesis of 5,6-dihydrouridine (D), a modified base found in the D-loop of most tRNAs, via the reduction of the C5-C6 double bond in target uridines. Specifically modifies U20 and U20a in tRNAs. This chain is tRNA-dihydrouridine(20/20a) synthase, found in Xylella fastidiosa (strain Temecula1 / ATCC 700964).